Reading from the N-terminus, the 581-residue chain is Suppressor of cytokine signaling 7 (581 aa).

Disordered stretches follow at residues 1-23 (MVFRNVGRPPEEEDVEAAPEPGP), 89-109 (PPPPQPQPPAAAPQAGEDPTE), 123-272 (EAES…RTQS), and 297-316 (QRGLTSPHPPTPPPPPRRSL). Pro residues-rich tracts occupy residues 89 to 99 (PPPPQPQPPAA), 154 to 164 (PPGPELPPVPF), and 187 to 198 (QPPPPPPPPGPL). The tract at residues 124 to 494 (AESLETNSCS…GKFLYFLRSR (371 aa)) is mediates interaction with SORBS3. Residues 208 to 219 (GSFKIRLSRLFR) are compositionally biased toward basic residues. Over residues 303–313 (PHPPTPPPPPR) the composition is skewed to pro residues. Residues 400–509 (WYWGPMNWED…PTPVQLLYPV (110 aa)) form the SH2 domain. An SOCS box domain is found at 504–554 (QLLYPVSRFSNVKSLQHLCRFRIRQLVRIDHIPDLPLPKPLISYIRKFYYY).

As to quaternary structure, substrate-recognition component of the ECS(SOCS7) complex, composed of SOCS7, CUL5, ELOB, ELOC and RNF7/RBX2. Interacts, via the third proline-rich region, with the second SH3 domain of the adapter protein NCK1. Also interacts with GRB2, INSR, PLCG1, SORBS3/vinexin, and phosphorylated STAT3 and STAT5. Interacts with SEPT6. Interacts with phosphorylated IRS4 and PIK3R1. Expressed in brain and leukocytes. Also in fetal lung fibroblasts and fetal brain.

The protein localises to the cytoplasm. It localises to the nucleus. Its subcellular location is the cell membrane. Its pathway is protein modification; protein ubiquitination. Substrate-recognition component of a cullin-5-RING E3 ubiquitin-protein ligase complex (ECS complex, also named CRL5 complex), which mediates the ubiquitination and subsequent proteasomal degradation of target proteins, such as DAB1 and IRS1. Specifically recognizes and binds phosphorylated proteins via its SH2 domain, promoting their ubiquitination. The ECS(SOCS7) complex acts as a key regulator of reelin signaling by mediating ubiquitination and degradation of phosphorylated DAB1 in the cortical plate of the developing cerebral cortex, thereby regulating neuron positioning during cortex development. Functions in insulin signaling and glucose homeostasis through IRS1 ubiquitination and subsequent proteasomal degradation. Also inhibits prolactin, growth hormone and leptin signaling by preventing STAT3 and STAT5 activation, sequestering them in the cytoplasm and reducing their binding to DNA. The chain is Suppressor of cytokine signaling 7 from Homo sapiens (Human).